The sequence spans 390 residues: Putative transposase y4qE (390 aa).

It belongs to the transposase IS1111A/IS1328/IS1533 family.

The polypeptide is Putative transposase y4qE (Sinorhizobium fredii (strain NBRC 101917 / NGR234)).